The primary structure comprises 408 residues: tRNA pseudouridine synthase D (408 aa).

Catalysis depends on aspartate 82, which acts as the Nucleophile. The TRUD domain occupies 157-367; the sequence is GVPNRFGEQR…MEGERRPLRV (211 aa).

This sequence belongs to the pseudouridine synthase TruD family.

It carries out the reaction uridine(13) in tRNA = pseudouridine(13) in tRNA. Its function is as follows. Responsible for synthesis of pseudouridine from uracil-13 in transfer RNAs. The sequence is that of tRNA pseudouridine synthase D from Geobacter sulfurreducens (strain ATCC 51573 / DSM 12127 / PCA).